Reading from the N-terminus, the 473-residue chain is ATP synthase subunit beta (473 aa).

158–165 is a binding site for ATP; the sequence is GGAGVGKT.

The protein belongs to the ATPase alpha/beta chains family. F-type ATPases have 2 components, CF(1) - the catalytic core - and CF(0) - the membrane proton channel. CF(1) has five subunits: alpha(3), beta(3), gamma(1), delta(1), epsilon(1). CF(0) has three main subunits: a(1), b(2) and c(9-12). The alpha and beta chains form an alternating ring which encloses part of the gamma chain. CF(1) is attached to CF(0) by a central stalk formed by the gamma and epsilon chains, while a peripheral stalk is formed by the delta and b chains.

The protein localises to the cell membrane. The enzyme catalyses ATP + H2O + 4 H(+)(in) = ADP + phosphate + 5 H(+)(out). In terms of biological role, produces ATP from ADP in the presence of a proton gradient across the membrane. The catalytic sites are hosted primarily by the beta subunits. In Bacillus licheniformis (strain ATCC 14580 / DSM 13 / JCM 2505 / CCUG 7422 / NBRC 12200 / NCIMB 9375 / NCTC 10341 / NRRL NRS-1264 / Gibson 46), this protein is ATP synthase subunit beta.